The primary structure comprises 198 residues: Na(+)-translocating NADH-quinone reductase subunit E (198 aa).

6 helical membrane passes run 11–31 (SVFIENMALSFFLGMCTFLAV), 35–55 (VSTAFGLGIAVIVVLGISVPV), 77–97 (FLNFITFIGVIAALVQILEMF), 110–130 (GIFLPLITVNCAIFGGVSFMV), 140–160 (VVYGIGAGTGWMLAIVALAGL), and 176–196 (LGITFITVGLMALGFMSFSGI).

It belongs to the NqrDE/RnfAE family. Composed of six subunits; NqrA, NqrB, NqrC, NqrD, NqrE and NqrF.

The protein resides in the cell inner membrane. The catalysed reaction is a ubiquinone + n Na(+)(in) + NADH + H(+) = a ubiquinol + n Na(+)(out) + NAD(+). In terms of biological role, NQR complex catalyzes the reduction of ubiquinone-1 to ubiquinol by two successive reactions, coupled with the transport of Na(+) ions from the cytoplasm to the periplasm. NqrA to NqrE are probably involved in the second step, the conversion of ubisemiquinone to ubiquinol. The polypeptide is Na(+)-translocating NADH-quinone reductase subunit E (Mannheimia succiniciproducens (strain KCTC 0769BP / MBEL55E)).